Here is a 1190-residue protein sequence, read N- to C-terminus: Plakophilin-4 (1190 aa).

The interval 1-32 (MPAPEQGSLVEEGQPQTHQEAVSTGPGMEPET) is disordered. Residues 36–63 (TILASVKEQELQFQRLTRELEVERQIVA) adopt a coiled-coil conformation. The disordered stretch occupies residues 73–347 (AESPSIASTS…KRSGMTAVPQ (275 aa)). S75 carries the post-translational modification Phosphoserine. Polar residues predominate over residues 77-86 (SIASTSSTEK). T84 is modified (phosphothreonine). Phosphoserine occurs at positions 106, 132, 136, and 139. Polar residues-rich tracts occupy residues 138-156 (GSLG…SDSG), 163-203 (FHNS…QPSV), and 213-229 (SVPS…STGV). Phosphoserine occurs at positions 220, 230, and 235. The span at 230-241 (SPSRGSLRTSLG) shows a compositional bias: low complexity. Residues 247–266 (PSVTDSRPLNPSAYSSSTLP) are compositionally biased toward polar residues. 2 positions are modified to omega-N-methylarginine: R253 and R269. S272, S280, S313, S326, and S336 each carry phosphoserine. Positions 289–323 (SVTSRQTSNPNGPVPQYQTTTRVGSPLTLTDAQTR) are enriched in polar residues. Positions 324–337 (VASPSQGQVGSSSP) are enriched in low complexity. Y371 is modified (phosphotyrosine). Residues S391, S402, and S405 each carry the phosphoserine modification. The residue at position 411 (T411) is a Phosphothreonine. Y414 is modified (phosphotyrosine). A phosphoserine mark is found at S421, S426, and S437. Y477 bears the Phosphotyrosine mark. Residues S509, S511, and S514 each carry the phosphoserine modification. ARM repeat units lie at residues 517 to 556 (KDPR…HLCF), 559 to 598 (NKVK…NLVF), and 603 to 643 (DENK…NLSS). The segment covering 772–781 (GKESPSKDSE) has biased composition (basic and acidic residues). Residues 772 to 809 (GKESPSKDSEPSCWGKKKKKKKRTPQEDQWDGVGPIPG) are disordered. At S775 the chain carries Phosphoserine. The stretch at 861–900 (AYIRAAVRKEKGLPILVELLRMDNDRVVSSVATALRNMAL) is one ARM 4 repeat. T1012 and T1016 each carry phosphothreonine. 4 positions are modified to phosphoserine: S1044, S1090, S1099, and S1133.

It belongs to the beta-catenin family. As to quaternary structure, interacts (via the C-terminus) with FRMPD2 (via the PDZ 2 domain). Interacts with PDZD2. Interacts with RHOA; the interaction is detected at the midbody. Interacts with ECT2; the interaction is detected at the midbody. Interacts with CCDC85B.

It is found in the cell junction. The protein resides in the desmosome. Its subcellular location is the cytoplasm. The protein localises to the cytoskeleton. It localises to the spindle. It is found in the spindle pole. The protein resides in the midbody. Its subcellular location is the cell membrane. Plays a role as a regulator of Rho activity during cytokinesis. May play a role in junctional plaques. The polypeptide is Plakophilin-4 (Pkp4) (Mus musculus (Mouse)).